Consider the following 257-residue polypeptide: UPF0246 protein Shewmr4_2963 (257 aa).

This sequence belongs to the UPF0246 family.

This is UPF0246 protein Shewmr4_2963 from Shewanella sp. (strain MR-4).